A 426-amino-acid polypeptide reads, in one-letter code: Glutamate-1-semialdehyde 2,1-aminomutase 2 (426 aa).

Lysine 265 bears the N6-(pyridoxal phosphate)lysine mark.

This sequence belongs to the class-III pyridoxal-phosphate-dependent aminotransferase family. HemL subfamily. In terms of assembly, homodimer. The cofactor is pyridoxal 5'-phosphate.

The protein resides in the cytoplasm. The catalysed reaction is (S)-4-amino-5-oxopentanoate = 5-aminolevulinate. The protein operates within porphyrin-containing compound metabolism; protoporphyrin-IX biosynthesis; 5-aminolevulinate from L-glutamyl-tRNA(Glu): step 2/2. This is Glutamate-1-semialdehyde 2,1-aminomutase 2 from Lachnoclostridium phytofermentans (strain ATCC 700394 / DSM 18823 / ISDg) (Clostridium phytofermentans).